Reading from the N-terminus, the 412-residue chain is DnaJ homolog subfamily A member 2 (412 aa).

The J domain maps to 8 to 70; the sequence is KLYDILGVPP…EKRELYDRYG (63 aa). The residue at position 39 (lysine 39) is an N6-acetyllysine. 2 positions are modified to phosphoserine: serine 78 and serine 123. Residues 130–214 form a CR-type zinc finger; the sequence is GKTTKLQLSK…CEGKKVIKEV (85 aa). Lysine 134 participates in a covalent cross-link: Glycyl lysine isopeptide (Lys-Gly) (interchain with G-Cter in SUMO2). Zn(2+)-binding residues include cysteine 143 and cysteine 146. A CXXCXGXG motif repeat occupies 143–150; it reads CSACSGQG. Lysine 152 carries the post-translational modification N6-acetyllysine. 6 residues coordinate Zn(2+): cysteine 159, cysteine 162, cysteine 186, cysteine 189, cysteine 202, and cysteine 205. 3 CXXCXGXG motif repeats span residues 159–166, 186–193, and 202–209; these read CSACRGRG, CSDCNGEG, and CKKCEGKK. Positions 359–412 are disordered; it reads PEVPNIIGDTEEVELQEFDSTRGSGGGQRREAYNDSSDEESSSHHGPGVQCAHQ. At tyrosine 391 the chain carries Phosphotyrosine. Phosphoserine occurs at positions 394 and 395. Cysteine 409 carries the cysteine methyl ester modification. A lipid anchor (S-farnesyl cysteine) is attached at cysteine 409. A propeptide spans 410-412 (removed in mature form); sequence AHQ.

Its subcellular location is the membrane. Its function is as follows. Co-chaperone of Hsc70. Stimulates ATP hydrolysis and the folding of unfolded proteins mediated by HSPA1A/B (in vitro). This chain is DnaJ homolog subfamily A member 2 (DNAJA2), found in Bos taurus (Bovine).